The primary structure comprises 240 residues: Insulin-like growth factor-binding protein 3 receptor (240 aa).

The first 38 residues, 1–38, serve as a signal peptide directing secretion; that stretch reads MGNCQAGHNLHLCLAHHPPLVCATLILLLLGLSGLGLG. At 39–204 the chain is on the extracellular side; that stretch reads SFLLTHRTGL…SEELALCGSR (166 aa). N-linked (GlcNAc...) asparagine glycosylation is found at N73, N101, and N167. Residues 205–225 traverse the membrane as a helical segment; it reads LLVLGSFLLLFCGLLCCVTAM. At 226 to 240 the chain is on the cytoplasmic side; the sequence is CFHPRRESHWSRTRL.

Interacts with IGFBP3. Interacts with CASP8. Widely expressed in normal tissues but suppressed in prostate and breast tumor.

Its subcellular location is the cell membrane. Functionally, cell death receptor specific for IGFBP3, may mediate caspase-8-dependent apoptosis upon ligand binding. The sequence is that of Insulin-like growth factor-binding protein 3 receptor (TMEM219) from Homo sapiens (Human).